The chain runs to 359 residues: Heat-inducible transcription repressor HrcA (359 aa).

Belongs to the HrcA family.

In terms of biological role, negative regulator of class I heat shock genes (grpE-dnaK-dnaJ and groELS operons). Prevents heat-shock induction of these operons. The polypeptide is Heat-inducible transcription repressor HrcA (Roseiflexus castenholzii (strain DSM 13941 / HLO8)).